Consider the following 235-residue polypeptide: Elongation factor Tu (235 aa).

The tr-type G domain occupies 1 to 125; the sequence is KNMITGAAQM…EVDEYIPTPE (125 aa). GTP is bound at residue 47–50; it reads NKED.

Belongs to the TRAFAC class translation factor GTPase superfamily. Classic translation factor GTPase family. EF-Tu/EF-1A subfamily. Monomer.

It localises to the cytoplasm. It catalyses the reaction GTP + H2O = GDP + phosphate + H(+). Its function is as follows. GTP hydrolase that promotes the GTP-dependent binding of aminoacyl-tRNA to the A-site of ribosomes during protein biosynthesis. The sequence is that of Elongation factor Tu (tufA) from Gloeothece membranacea (strain PCC 6501 / SAG 26.84).